Here is a 190-residue protein sequence, read N- to C-terminus: uncharacterized protein (190 aa).

A helical transmembrane segment spans residues 12–34 (LLGLSIFLTTFLFVANFLPGIFA).

The protein resides in the membrane. This is an uncharacterized protein from Archaeoglobus fulgidus (strain ATCC 49558 / DSM 4304 / JCM 9628 / NBRC 100126 / VC-16).